Reading from the N-terminus, the 151-residue chain is Protein SprT-like (151 aa).

The SprT-like domain maps to 6–147; it reads LQRMVENLSE…GHCNGKLRMK (142 aa). Histidine 67 contributes to the Zn(2+) binding site. Glutamate 68 is an active-site residue. Residue histidine 71 participates in Zn(2+) binding.

The protein belongs to the SprT family. Zn(2+) is required as a cofactor.

The protein resides in the cytoplasm. This is Protein SprT-like from Staphylococcus aureus (strain MRSA252).